Reading from the N-terminus, the 214-residue chain is Pyridoxine/pyridoxamine 5'-phosphate oxidase (214 aa).

Residues 9-12 (RREY) and Lys67 each bind substrate. FMN is bound by residues 62 to 67 (RTVLLK), 77 to 78 (YS), Arg83, Lys84, and Gln106. The substrate site is built by Tyr124, Arg128, and Ser132. FMN-binding positions include 141–142 (QS) and Trp186. Residue 192–194 (RLH) participates in substrate binding. Arg196 is an FMN binding site.

This sequence belongs to the pyridoxamine 5'-phosphate oxidase family. In terms of assembly, homodimer. FMN is required as a cofactor.

It carries out the reaction pyridoxamine 5'-phosphate + O2 + H2O = pyridoxal 5'-phosphate + H2O2 + NH4(+). It catalyses the reaction pyridoxine 5'-phosphate + O2 = pyridoxal 5'-phosphate + H2O2. The protein operates within cofactor metabolism; pyridoxal 5'-phosphate salvage; pyridoxal 5'-phosphate from pyridoxamine 5'-phosphate: step 1/1. It participates in cofactor metabolism; pyridoxal 5'-phosphate salvage; pyridoxal 5'-phosphate from pyridoxine 5'-phosphate: step 1/1. Its function is as follows. Catalyzes the oxidation of either pyridoxine 5'-phosphate (PNP) or pyridoxamine 5'-phosphate (PMP) into pyridoxal 5'-phosphate (PLP). The chain is Pyridoxine/pyridoxamine 5'-phosphate oxidase from Porphyromonas gingivalis (strain ATCC 33277 / DSM 20709 / CIP 103683 / JCM 12257 / NCTC 11834 / 2561).